The chain runs to 495 residues: Glycerol kinase (495 aa).

Residue Thr-11 participates in ADP binding. 3 residues coordinate ATP: Thr-11, Thr-12, and Ser-13. Thr-11 is a sn-glycerol 3-phosphate binding site. Arg-15 lines the ADP pocket. Residues Arg-81, Glu-82, Tyr-133, and Asp-242 each contribute to the sn-glycerol 3-phosphate site. Positions 81, 82, 133, 242, and 243 each coordinate glycerol. ADP is bound by residues Thr-264 and Gly-307. ATP contacts are provided by Thr-264, Gly-307, Gln-311, and Gly-408. 2 residues coordinate ADP: Gly-408 and Asn-412.

It belongs to the FGGY kinase family.

The enzyme catalyses glycerol + ATP = sn-glycerol 3-phosphate + ADP + H(+). It participates in polyol metabolism; glycerol degradation via glycerol kinase pathway; sn-glycerol 3-phosphate from glycerol: step 1/1. With respect to regulation, inhibited by fructose 1,6-bisphosphate (FBP). In terms of biological role, key enzyme in the regulation of glycerol uptake and metabolism. Catalyzes the phosphorylation of glycerol to yield sn-glycerol 3-phosphate. The sequence is that of Glycerol kinase from Rhodospirillum rubrum (strain ATCC 11170 / ATH 1.1.1 / DSM 467 / LMG 4362 / NCIMB 8255 / S1).